We begin with the raw amino-acid sequence, 254 residues long: Putative epimerase LsrE (254 aa).

A helical transmembrane segment spans residues 14 to 34 (VALLASYPLSVGILAGQWIAL). Residues His-50, Asp-52, and His-81 each coordinate a divalent metal cation. Asp-52 (proton acceptor) is an active-site residue. Residues His-81, 166-169 (GYGS), 199-201 (DGS), and 221-222 (GS) each bind substrate. Asp-199 is a binding site for a divalent metal cation. Catalysis depends on Asp-199, which acts as the Proton donor.

The protein belongs to the ribulose-phosphate 3-epimerase family. The cofactor is a divalent metal cation.

The protein localises to the cell membrane. The chain is Putative epimerase LsrE (lsrE) from Salmonella paratyphi A (strain ATCC 9150 / SARB42).